A 256-amino-acid polypeptide reads, in one-letter code: Dioxygenase lolE1 (256 aa).

3 residues coordinate Fe cation: His-125, Asp-127, and His-203.

This sequence belongs to the PhyH family. Homodimer. Fe cation is required as a cofactor.

The protein operates within alkaloid biosynthesis. Its function is as follows. Dioxygenase; part of the gene cluster that mediates the biosynthesis of loline alkaloids, potent insecticidal agents composed of a pyrrolizidine ring system and an uncommon ether bridge linking carbons 2 and 7. Lolines are structurally differentiated by the various modifications of the L-amino group and include norloline, loline, N-methylloline, N-acetylloline, N-acetylnorloline, and N-formylloline. The first committed step is the condensation of O-acetyl-L-homoserine (derived from L-aspartic acid) and L-proline, probably catalyzed by the gamma-type pyridoxal 5'-phosphate(PLP)-dependent enzyme lolC, to give the diamino diacid, NACPP. Ensuing cyclization, decarboxylation, and acetylation steps yield 1-exo-acetamidopyrrolizidine (AcAP). LolO is required for installation of the ether bridge upon the pathway intermediate, 1-exo-acetamidopyrrolizidine (AcAP). In sequential 2-oxoglutarate- and O(2)-consuming steps, lolO removes hydrogens from C2 and C7 of AcAP to form both carbon-oxygen bonds in N-acetylnorloline (NANL), the precursor to all other lolines. The enzymes lolD, lolE, lolF and lolT have also been proposed to be involved in the ether-bridge installation. Further processing of the exocyclic moiety of NANL by fungal N-acetamidase (LolN), methyltransferase (LolM), and cytochrome P450 (LolP) enzymes, with occasional involvement of a plant acetyltransferase, generates the other known lolines. LolN transforms NANL to norlonine which is monomethylated and dimethylated to respectively lonine and N-methyllonine (NML) by lolM. LolP catalyzes hydroxylation of the methyl group in N-methylloline (NML) and further oxygenation to N-formylloline (NFL). A plant acetyltransferase is responsible for the acetylation of loline to form N-acetylloline (NAL). LolA might interact with aspartate kinase to prevent feedback inhibition of its activity by these end products and thereby promote production of L-homoserine from L-aspartate. This chain is Dioxygenase lolE1, found in Epichloe uncinata (Endophyte fungus).